We begin with the raw amino-acid sequence, 371 residues long: Ligninase LG5 (371 aa).

The N-terminal stretch at 1–21 (MAFKKLLAVLTAALSLRAAQG) is a signal peptide. Residues 22-27 (AAVEKR) constitute a propeptide that is removed on maturation. Intrachain disulfides connect Cys-30–Cys-42, Cys-41–Cys-311, Cys-61–Cys-146, and Cys-275–Cys-344. His-74 acts as the Proton acceptor in catalysis. Ca(2+)-binding residues include Asp-75, Gly-92, Asp-94, and Ser-96. His-202 provides a ligand contact to heme b. Ser-203, Asp-220, Thr-222, Ile-225, and Asp-227 together coordinate Ca(2+). N-linked (GlcNAc...) asparagine glycosylation is present at Asn-283. The disordered stretch occupies residues 349 to 371 (FPTLSTLPGPATSVARIPPPPGA).

This sequence belongs to the peroxidase family. Ligninase subfamily. The cofactor is Ca(2+). It depends on heme b as a cofactor.

The catalysed reaction is 1-(3,4-dimethoxyphenyl)-2-(2-methoxyphenoxy)propane-1,3-diol + H2O2 = 3,4-dimethoxybenzaldehyde + guaiacol + glycolaldehyde + H2O. It catalyses the reaction 2 (3,4-dimethoxyphenyl)methanol + H2O2 = 2 (3,4-dimethoxyphenyl)methanol radical + 2 H2O. Its pathway is secondary metabolite metabolism; lignin degradation. Functionally, depolymerization of lignin. Catalyzes the C(alpha)-C(beta) cleavage of the propyl side chains of lignin. This is Ligninase LG5 (GLG5) from Phanerodontia chrysosporium (White-rot fungus).